Reading from the N-terminus, the 601-residue chain is Elongation factor 4 (601 aa).

In terms of domain architecture, tr-type G spans 5–187 (ENIRNFCIVA…AIITTFPPPK (183 aa)). GTP-binding positions include 17–22 (DHGKST) and 134–137 (NKID).

This sequence belongs to the TRAFAC class translation factor GTPase superfamily. Classic translation factor GTPase family. LepA subfamily.

Its subcellular location is the cell inner membrane. The enzyme catalyses GTP + H2O = GDP + phosphate + H(+). In terms of biological role, required for accurate and efficient protein synthesis under certain stress conditions. May act as a fidelity factor of the translation reaction, by catalyzing a one-codon backward translocation of tRNAs on improperly translocated ribosomes. Back-translocation proceeds from a post-translocation (POST) complex to a pre-translocation (PRE) complex, thus giving elongation factor G a second chance to translocate the tRNAs correctly. Binds to ribosomes in a GTP-dependent manner. The chain is Elongation factor 4 from Treponema denticola (strain ATCC 35405 / DSM 14222 / CIP 103919 / JCM 8153 / KCTC 15104).